Here is a 222-residue protein sequence, read N- to C-terminus: MAGKPKLHYFNGRGRMEPIRWLLAAAGVEFEEKFIGSAEDLGKLRNDGSLMFQQVPMVEIDGMKLVQTRAILNYIASKYNLYGKDIKERALIDMYTEGMADLNEMILLLPLCRPEEKDAKIALIKEKTKSRYFPAFEKVLQSHGQDYLVGNKLSRADISLVELLYYVEELDSSLISNFPLLKALKTRISNLPTVKKFLQPGSPRKPPADAKALEEARKIFRF.

Ala-2 carries the N-acetylalanine modification. In terms of domain architecture, GST N-terminal spans 3 to 83 (GKPKLHYFNG…YIASKYNLYG (81 aa)). N6-succinyllysine is present on Lys-4. Residues Tyr-9, Arg-45, 54-55 (QV), and 67-68 (QT) each bind glutathione. The region spanning 85–207 (DIKERALIDM…LQPGSPRKPP (123 aa)) is the GST C-terminal domain.

This sequence belongs to the GST superfamily. Alpha family. As to quaternary structure, homodimer.

Its subcellular location is the cytoplasm. The enzyme catalyses RX + glutathione = an S-substituted glutathione + a halide anion + H(+). It carries out the reaction androst-5-ene-3,17-dione = androst-4-ene-3,17-dione. The catalysed reaction is pregn-5-ene-3,20-dione = progesterone. Its function is as follows. Conjugation of reduced glutathione to a wide number of exogenous and endogenous hydrophobic electrophiles. Catalyzes isomerization reactions that contribute to the biosynthesis of steroid hormones. Efficiently catalyze obligatory double-bond isomerizations of delta(5)-androstene-3,17-dione and delta(5)-pregnene-3,20-dione, precursors to testosterone and progesterone, respectively. Has substantial activity toward aflatoxin B1-8,9-epoxide. The protein is Glutathione S-transferase A3 of Homo sapiens (Human).